The primary structure comprises 121 residues: Small ribosomal subunit protein uS13 (121 aa).

The disordered stretch occupies residues 93 to 121 (RGLPMRGQRTRTNARTRKGPRKGAAALKK).

Belongs to the universal ribosomal protein uS13 family. As to quaternary structure, part of the 30S ribosomal subunit. Forms a loose heterodimer with protein S19. Forms two bridges to the 50S subunit in the 70S ribosome.

Located at the top of the head of the 30S subunit, it contacts several helices of the 16S rRNA. In the 70S ribosome it contacts the 23S rRNA (bridge B1a) and protein L5 of the 50S subunit (bridge B1b), connecting the 2 subunits; these bridges are implicated in subunit movement. Contacts the tRNAs in the A and P-sites. The polypeptide is Small ribosomal subunit protein uS13 (Paracidovorax citrulli (strain AAC00-1) (Acidovorax citrulli)).